We begin with the raw amino-acid sequence, 472 residues long: E1B 55 kDa protein (472 aa).

The disordered stretch occupies residues 1–90 (MERPNPSVGG…GQRGEKRKLE (90 aa)). The span at 32–44 (RLLAGAASARSGS) shows a compositional bias: low complexity. The segment covering 45–57 (SAGGGGGGGGGGE) has biased composition (gly residues). Ser-468 and Ser-469 each carry phosphoserine.

Belongs to the adenoviridae E1B 55 kDa protein family. As to quaternary structure, interacts with host PML-4 and PML-5; this interaction promotes efficient subnuclear targeting of E1B-55K to PML nuclear bodies. Interacts with E4-ORF3 protein. Interacts with E4-ORF6 protein.

The protein localises to the host nucleus. The protein resides in the host cytoplasm. Its function is as follows. Plays a major role to prevent cellular inhibition of viral genome replication. Assembles an SCF-like E3 ubiquitin ligase complex based on the cellular proteins ELOB, ELOC, CUL5 and RBX1, in cooperation with viral E4orf6. This viral RING-type ligase ubiquitinates cellular substrates and targets them to proteasomal degradation: TP53/p53, LIG4, MRE11-RAD50-NBS1 (MRN) complex, ITGA3, DAXX and BLM. E1B-55K probably acts as the substrate-specific adapter of the SCF-like E3 ubiquitin ligase complex. Degradation of host TP53/p53 activity is essential for preventing E1A-induced TP53 accumulation that would otherwise lead to cell apoptosis and growth arrest. E1B-55K also inactivates TP53 transcription-factor activity by binding its transactivation domain. E1B-55K also functions as a SUMO1 E3 ligase for TP53 which causes the latter to be sequestered in promyelocytic leukemia (PML) nuclear bodies thereby contributing to maximal inhibition of TP53 function. This chain is E1B 55 kDa protein, found in Homo sapiens (Human).